A 419-amino-acid polypeptide reads, in one-letter code: MGEKKPEPLDFVKDFQEYLTQQTHHVNMISGSVSGDKEAETLQGAGTDGDQNGLDHPSVEVSLDENSGMLVDGFERTFDGKLKCRYCNYASKGTARLIEHIRIHTGEKPHRCHLCPFASAYERHLEAHMRSHTGEKPYKCELCSFRCSDRSNLSHHRRRKHKMVPIKGTRSSLSSKKMWGVLQKKTSNLGYSRRALINLSPPSMVVQKPDYLNDFTHEIPNIQTDSYEAMAKTTPTGGLPRDPQELMVDNPLNQLSTLAGQLSSLPPENQNPASPDVDACPDEKPFMIQQPSAQAVVSAVSASIPQSSSPTSPEPRPSHSQRNYSPVAGPSSEPSAHTSTPSIGNSQPSTPAPTLPVQDPQLLHHCQHCDVYFADNVLYTVHMGCHGYDSPFQCNVCGCKCKDKYDFACHFARGQHNQH.

Lys5 is covalently cross-linked (Glycyl lysine isopeptide (Lys-Gly) (interchain with G-Cter in SUMO2)). The segment at 36–55 (DKEAETLQGAGTDGDQNGLD) is disordered. C2H2-type zinc fingers lie at residues 82-104 (LKCR…IRIH), 110-132 (HRCH…MRSH), and 138-161 (YKCE…RRKH). Lys185 is covalently cross-linked (Glycyl lysine isopeptide (Lys-Gly) (interchain with G-Cter in SUMO2)). A compositionally biased stretch (polar residues) spans 262 to 273 (LSSLPPENQNPA). 2 disordered regions span residues 262 to 284 (LSSL…PDEK) and 297 to 356 (VSAV…PTLP). Positions 297-311 (VSAVSASIPQSSSPT) are enriched in low complexity. Residues 332-349 (SEPSAHTSTPSIGNSQPS) are compositionally biased toward polar residues. 2 consecutive C2H2-type zinc fingers follow at residues 364 to 386 (HHCQ…MGCH) and 392 to 416 (FQCN…RGQH).

The protein belongs to the Ikaros C2H2-type zinc-finger protein family. Self-associates. Interacts with other family members; IKZF1, IKZF2, IKZF3 and IKZF4.

Its subcellular location is the nucleus. Functionally, transcriptional repressor that binds the core 5'GNNTGTNG-3' DNA consensus sequence. Involved in megakaryocyte differentiation. The protein is Zinc finger protein Pegasus (Ikzf5) of Mus musculus (Mouse).